A 355-amino-acid chain; its full sequence is Protein ATP1B4 (355 aa).

The Nuclear portion of the chain corresponds to 1–108; the sequence is MRRQLRSRRA…SLARTGQSWS (108 aa). Residues 33 to 77 form a disordered region; it reads ADEEEEAEEEARVMVVPDLEEEEEEEEEKEEEEKEEEDSHSQETD. A compositionally biased stretch (acidic residues) spans 50 to 68; sequence DLEEEEEEEEEKEEEEKEE. The helical; Signal-anchor for type II membrane protein transmembrane segment at 109-129 threads the bilayer; sequence LILVIYFFFYASLAAVITLCM. Over 130 to 355 the chain is Perinuclear space; sequence YTLFLTISPY…RVIFTLNIET (226 aa).

The protein belongs to the X(+)/potassium ATPases subunit beta family. In terms of assembly, associates with a SMAD7-transcriptional complex. Interacts with SNW1 and TOR1AIP1. Does not associate with known Na,K-ATPase alpha-subunits.

The protein localises to the nucleus inner membrane. Its function is as follows. May act as a transcriptional coregulator during muscle development through its interaction with SNW1. Has lost its ancestral function as a Na,K-ATPase beta-subunit. The chain is Protein ATP1B4 (ATP1B4) from Bos taurus (Bovine).